A 175-amino-acid polypeptide reads, in one-letter code: MTTIVTIRKGGKVVMAGDGQVSLGQTVMKGNARKVRRIGKGDVIAGFAGATADAFTLLERLEKKLEQYPGQLMRAAVELAKDWRTDKYLRNLEAMMLVADKSVTLAITGNGDVLEPEHGALAIGSGGNYALAAARALMDTDKSAEDVARRALDIAADICVYTNHNVVIETLDAEA.

The active site involves T2. A156, C159, and T162 together coordinate Na(+).

Belongs to the peptidase T1B family. HslV subfamily. In terms of assembly, a double ring-shaped homohexamer of HslV is capped on each side by a ring-shaped HslU homohexamer. The assembly of the HslU/HslV complex is dependent on binding of ATP.

It localises to the cytoplasm. The catalysed reaction is ATP-dependent cleavage of peptide bonds with broad specificity.. With respect to regulation, allosterically activated by HslU binding. Its function is as follows. Protease subunit of a proteasome-like degradation complex believed to be a general protein degrading machinery. This Rhizobium rhizogenes (strain K84 / ATCC BAA-868) (Agrobacterium radiobacter) protein is ATP-dependent protease subunit HslV.